The primary structure comprises 432 residues: Glutamyl-tRNA reductase (432 aa).

Substrate is bound by residues 55–58 (TCNR), serine 114, 119–121 (ETQ), and glutamine 125. The Nucleophile role is filled by cysteine 56. An NADP(+)-binding site is contributed by 194–199 (GAGEMI).

Belongs to the glutamyl-tRNA reductase family. In terms of assembly, homodimer.

The catalysed reaction is (S)-4-amino-5-oxopentanoate + tRNA(Glu) + NADP(+) = L-glutamyl-tRNA(Glu) + NADPH + H(+). The protein operates within porphyrin-containing compound metabolism; protoporphyrin-IX biosynthesis; 5-aminolevulinate from L-glutamyl-tRNA(Glu): step 1/2. Functionally, catalyzes the NADPH-dependent reduction of glutamyl-tRNA(Glu) to glutamate 1-semialdehyde (GSA). In Burkholderia lata (strain ATCC 17760 / DSM 23089 / LMG 22485 / NCIMB 9086 / R18194 / 383), this protein is Glutamyl-tRNA reductase.